Here is a 282-residue protein sequence, read N- to C-terminus: Cytochrome c1 (282 aa).

An N-terminal signal peptide occupies residues 1–24; the sequence is MTIKLRFVASLALVFGLAAASVPA. Heme c-binding residues include Cys-62, Cys-65, His-66, and Met-207. Residues 253-273 form a helical membrane-spanning segment; sequence WWVLGFLVIFTGLLVATKIVV.

The main subunits of complex b-c1 are: cytochrome b, cytochrome c1 and the Rieske protein. Binds 1 heme c group covalently per subunit.

It is found in the cell membrane. In terms of biological role, component of the ubiquinol-cytochrome c reductase complex (complex III or cytochrome b-c1 complex), which is a respiratory chain that generates an electrochemical potential coupled to ATP synthesis. c1 functions as an electron donor to cytochrome c. The chain is Cytochrome c1 (petC) from Blastochloris viridis (Rhodopseudomonas viridis).